The chain runs to 414 residues: Secernin-1 (414 aa).

Belongs to the peptidase C69 family. Secernin subfamily.

It is found in the cytoplasm. Regulates exocytosis in mast cells. Increases both the extent of secretion and the sensitivity of mast cells to stimulation with calcium. The polypeptide is Secernin-1 (Scrn1) (Rattus norvegicus (Rat)).